Consider the following 545-residue polypeptide: Capsular polysaccharide phosphotransferase SacB (545 aa).

Belongs to the stealth family.

In terms of biological role, may be the polymerase that links individual UDP-N-acetyl-D-mannosamine monomers. In serotype A the capsule is composed of repeated units of (alpha 1-6)-linked N-acetyl-D-mannosamine-1-phosphate. The polypeptide is Capsular polysaccharide phosphotransferase SacB (sacB) (Neisseria meningitidis serogroup A).